The chain runs to 180 residues: Cell division protein SepF (180 aa).

The interval 14-81 (NSEDDEEFDN…SKITPISKSS (68 aa)) is disordered. Positions 15-35 (SEDDEEFDNEDYYLDDEEEEE) are enriched in acidic residues. The span at 57-68 (TRRDTTPKEKPV) shows a compositional bias: basic and acidic residues. Residues 69 to 79 (KTTSKITPISK) show a composition bias toward low complexity.

It belongs to the SepF family. As to quaternary structure, homodimer. Interacts with FtsZ.

The protein localises to the cytoplasm. Functionally, cell division protein that is part of the divisome complex and is recruited early to the Z-ring. Probably stimulates Z-ring formation, perhaps through the cross-linking of FtsZ protofilaments. Its function overlaps with FtsA. In Agathobacter rectalis (strain ATCC 33656 / DSM 3377 / JCM 17463 / KCTC 5835 / VPI 0990) (Eubacterium rectale), this protein is Cell division protein SepF.